A 467-amino-acid polypeptide reads, in one-letter code: MRLPREIGPIHFVGIGGIGMSGIAEVLCNLGYTVQGSDASDNANVARLREKGITVSVGHKAENVAGADVVVVSTAIKRDNPELMAARAQRIPVVRRAEMLAELMRLKSCVAIAGTHGKTTTTSMVAALLDAGGLDPTVINGGIINAYGTNARLGGGEWMVVEADESDGTFLKLPADVAIVTNVDPEHLDHFKTFEAVQDAFRAFVENVPFYGFAVMCIDHPVVQALVGKIEDRRIITYGVNPQADVRLVDLTPMGGGSSFKVVFRDRKSGATHEISDIVLPMPGRHNASNATAAIAVARELGLSDEAIRKAIGGFGGVKRRFTRTGEWNGVTVIDDYGHHPVEIAAVLKAARESSNGKVVAVVQPHRYTRLQSLFEEFCTCFNDADAVVVADVYPAGEAPIEGIDRDHFVLGLRAHGHRDVLPLPKAADLAGIVKDLAKPGDLVVCLGAGNITQWAYALPNELKALG.

114 to 120 (GTHGKTT) lines the ATP pocket.

It belongs to the MurCDEF family.

Its subcellular location is the cytoplasm. The catalysed reaction is UDP-N-acetyl-alpha-D-muramate + L-alanine + ATP = UDP-N-acetyl-alpha-D-muramoyl-L-alanine + ADP + phosphate + H(+). It functions in the pathway cell wall biogenesis; peptidoglycan biosynthesis. Functionally, cell wall formation. This Bradyrhizobium sp. (strain ORS 278) protein is UDP-N-acetylmuramate--L-alanine ligase.